A 158-amino-acid chain; its full sequence is Ribosome maturation factor RimP (158 aa).

This sequence belongs to the RimP family.

The protein localises to the cytoplasm. Its function is as follows. Required for maturation of 30S ribosomal subunits. The sequence is that of Ribosome maturation factor RimP from Lactobacillus gasseri (strain ATCC 33323 / DSM 20243 / BCRC 14619 / CIP 102991 / JCM 1131 / KCTC 3163 / NCIMB 11718 / NCTC 13722 / AM63).